Consider the following 721-residue polypeptide: Dipeptidyl-peptidase 5 (721 aa).

Positions Met1–Ala18 are cleaved as a signal peptide. Residues Asn75, Asn94, Asn151, and Asn254 are each glycosylated (N-linked (GlcNAc...) asparagine). A disordered region spans residues Ala271 to Pro297. N-linked (GlcNAc...) asparagine glycosylation is found at Asn380 and Asn450. Ser560 functions as the Charge relay system in the catalytic mechanism. An N-linked (GlcNAc...) asparagine glycan is attached at Asn607. Catalysis depends on charge relay system residues Asp643 and His675.

This sequence belongs to the peptidase S9C family. In terms of processing, N-glycosylated. As to expression, expressed in mycelia and conidia.

It is found in the secreted. Functionally, may be involved in metabolism of dipeptides or may affect host defense mechanisms. Has a substrate specificity limited to the hydrolysis of X-Ala, His-Ser, and Ser-Tyr dipeptides at a neutral pH optimum. The protein is Dipeptidyl-peptidase 5 of Aspergillus fumigatus (strain ATCC MYA-4609 / CBS 101355 / FGSC A1100 / Af293) (Neosartorya fumigata).